An 801-amino-acid polypeptide reads, in one-letter code: Phosphatidylinositol 3-kinase pik3 (801 aa).

A C2 PI3K-type domain is found at 14–166 (VTARFLVKFC…RLDGLLLKLQ (153 aa)). One can recognise a PIK helical domain in the interval 257–439 (DKDLKPNSKI…SSVMFLFQKE (183 aa)). Residues 515–785 (IPDACTVFKS…LINDSVSALF (271 aa)) enclose the PI3K/PI4K catalytic domain. Residues 521 to 527 (VFKSTMQ) form a G-loop region. Residues 654-662 (GVGDRHLDN) are catalytic loop. Residues 673–694 (HADFGYILGRDPKLFSPAMKLS) are activation loop.

This sequence belongs to the PI3/PI4-kinase family. As to quaternary structure, component of the autophagy-specific vps34 PI3-kinase complex I composed of vps15, atg6, pik3/vps34, atg14 and atg38. Also a component of the VPS34 PI3-kinase complex II composed of atg6, pik3, vps15 and vps38.

It carries out the reaction a 1,2-diacyl-sn-glycero-3-phospho-(1D-myo-inositol) + ATP = a 1,2-diacyl-sn-glycero-3-phospho-(1D-myo-inositol-3-phosphate) + ADP + H(+). In terms of biological role, phosphatidylinositol 3-kinase that functions as a part of the autophagy-specific VPS34 PI3-kinase complex I that plays a role in autophagosome assembly. This complex is essential to recruit the atg8-phosphatidylinositol conjugate and the atg12-atg5 conjugate to the pre-autophagosomal structure. Also functions as part of the VPS34 PI3-kinase complex II. The sequence is that of Phosphatidylinositol 3-kinase pik3 (pik3) from Schizosaccharomyces pombe (strain 972 / ATCC 24843) (Fission yeast).